The sequence spans 1320 residues: MDSIKKNTINRINGLPINHNNLSKTSIISMDDDYNSNSSFYSTNNSILNSVTKNSNYLNNNNNNNNNNNNNNNISISNCNNNNTNNKINEQLKTFNNIFEEKGEFLKEEIDNKFNDIISLMNQSKNQLFLSLNDIDSLYDLSPLSTTSTITLENNNNNNNNLIKFKLFNNDSIKKYILPVSSKTIKFKQRQILIEQQEFNEKHNQQKHLLELQRQQVLSDQQNQFQEQHKQQLSLKQQELEAIQQDTNKVKQQLIETHDKLLIEKEKQFKQDLNSLELNLQNKFTNEYQSKEQEFNKKLEQQQQQLEKQFQQTKELLIVQETLTLKSKLTTEFQEQLKTHQDQINKQELLLKQQEYQLFLKQQEISSIQKQHQDDLSSLKSKLSSDQDQIKKQLLQQESDLLKKQQELLLKQQELDIQSKQLKEEQEKQQQQQEKQQEKQQQQQPVVVPVKPTTSTVVSATTATLIKAPIVSTTTVSTATVSKLVTNGIAKPTPLTTMKQTVTAVPTLMDNKTRLKKLVPTATTTTTKEENNKEYDKMMQELDTQPNNSNLKNLNEKKLETLKQQLTFDDSVSFSNGNDESSINLSKYLEETNKSVENTFDIMSNTLKRKNEPIQQPSSSSSQLSSSQQPSSSSSSSSSSIGLKKRLSDDKTTIVTSKPTNKVQPQSLNSNINNNVVPPSPVAAIANKLKKQQELEKLKLEEEERLRKKQEEQLAKREVEKEQERLEKKKKNDEKRKKVEENQQQRILEEEKKKKEAEDRELARKHKEDSDKKKREEEEDAKKRIQERFRETQEQERKREEFKKQQQEQELARIKKEKLQQEKLQQEKEKQEKQKQQQQQQEEEQQKKKTVQTILPTPQTPSRSANNNYDDAANTASATKAKYALSSILSMVFGATKSPHFKPSTSQDDQDDDDCEDYDGTDENSENEAKGEYQDDSDQEIEEQFENDSDESMASTESNGDIYFNKNKNSNNSNNNNDVNQSRKDKSIVFDSDSLNRNHNDSNNSSEEEEPERDPVFLTPLPKILSNMKNNNNNNTYSNSPVIKGLSPPSSVSDYSPSSESNDCFSPLTPTNNNKINNNKINNNNSNNNSFNNSNSYRGLSPAQIIESHTPKCINRSGESKTSPFLTIRNTPSPLKNSPIKFNMSSASSLSSFDSDNDSDYNDNDIDDGEILGNPNENFTTPLKNQENNNNNNSNNSNTQYPIITSPPSNEDGDENYYFEEEEIDYEYDKRVPDWAKNHNLDNSLKQQRFYDPDRIFSMIGPVYLYEIFPKQDLGGKIKDFSKVKRNLSSDWSRDCNTEKEDISYKKNMGFTNPIIVNKK.

Disordered regions lie at residues 53–75 (KNSN…NNIS), 426–447 (QEKQ…QPVV), 611–679 (NEPI…VVPP), 701–877 (EEEE…NTAS), and 896–1215 (TKSP…DGDE). Low complexity-rich tracts occupy residues 54 to 75 (NSNY…NNIS), 429 to 447 (QQQQ…QPVV), and 615 to 640 (QQPS…SSSS). Residues 221-444 (QQNQFQEQHK…KQQEKQQQQQ (224 aa)) are a coiled coil. Residues 653-668 (TIVTSKPTNKVQPQSL) show a composition bias toward polar residues. Residues 669–679 (NSNINNNVVPP) show a composition bias toward low complexity. The stretch at 683-855 (AAIANKLKKQ…QKKKTVQTIL (173 aa)) forms a coiled coil. Positions 701 to 835 (EEEERLRKKQ…QEKEKQEKQK (135 aa)) are enriched in basic and acidic residues. Polar residues predominate over residues 851 to 863 (VQTILPTPQTPSR). The span at 864-877 (SANNNYDDAANTAS) shows a compositional bias: low complexity. 2 stretches are compositionally biased toward acidic residues: residues 908–926 (DDQD…ENSE) and 934–951 (QDDS…DSDE). Low complexity predominate over residues 965–977 (NKNKNSNNSNNNN). Over residues 981–1000 (QSRKDKSIVFDSDSLNRNHN) the composition is skewed to basic and acidic residues. Composition is skewed to low complexity over residues 1026-1040 (SNMK…YSNS) and 1047-1061 (SPPS…SSES). Residues 1062 to 1071 (NDCFSPLTPT) show a composition bias toward polar residues. A compositionally biased stretch (low complexity) spans 1072–1096 (NNNKINNNKINNNNSNNNSFNNSNS). Positions 1120–1136 (SKTSPFLTIRNTPSPLK) are enriched in polar residues. Over residues 1143 to 1154 (NMSSASSLSSFD) the composition is skewed to low complexity. Acidic residues predominate over residues 1155-1170 (SDNDSDYNDNDIDDGE). The span at 1175–1187 (PNENFTTPLKNQE) shows a compositional bias: polar residues. Residues 1188 to 1198 (NNNNNNSNNSN) are compositionally biased toward low complexity. Polar residues predominate over residues 1199-1209 (TQYPIITSPPS).

The protein belongs to the INCENP family. In terms of assembly, interacts with aurK.

Its subcellular location is the chromosome. It is found in the centromere. The protein resides in the cytoplasm. It localises to the cytoskeleton. The protein localises to the spindle. Its subcellular location is the nucleus. It is found in the cleavage furrow. In terms of biological role, chromosomal passenger protein that seems to be required for chromosome segregation and the onset of cytokinesis during mitosis. Plays a key role in the abscission of daughter cells at the end of cytokinesis and in the establishment or maintenance of a bipolar spindle. The protein is Inner centromere protein A (icpA) of Dictyostelium discoideum (Social amoeba).